The following is a 429-amino-acid chain: Maltoporin 2 (429 aa).

The signal sequence occupies residues 1 to 25 (MMITLRKLPLAVAVAAGVMSAQALA). Over residues 397-412 (GLQTKDSSGSGAFTSS) the composition is skewed to polar residues. Residues 397 to 416 (GLQTKDSSGSGAFTSSRGDD) form a disordered region.

This sequence belongs to the porin LamB (TC 1.B.3) family. In terms of assembly, homotrimer formed of three 18-stranded antiparallel beta-barrels, containing three independent channels.

The protein localises to the cell outer membrane. It carries out the reaction beta-maltose(in) = beta-maltose(out). Its function is as follows. Involved in the transport of maltose and maltodextrins. The protein is Maltoporin 2 of Klebsiella pneumoniae subsp. pneumoniae (strain ATCC 700721 / MGH 78578).